The sequence spans 324 residues: UDP-N-acetylenolpyruvoylglucosamine reductase (324 aa).

Residues 38–231 (AGGSARRLYV…SRERIRSLLK (194 aa)) form the FAD-binding PCMH-type domain. R195 is an active-site residue. The active-site Proton donor is the S246. Residue E316 is part of the active site.

Belongs to the MurB family. It depends on FAD as a cofactor.

It is found in the cytoplasm. The enzyme catalyses UDP-N-acetyl-alpha-D-muramate + NADP(+) = UDP-N-acetyl-3-O-(1-carboxyvinyl)-alpha-D-glucosamine + NADPH + H(+). Its pathway is cell wall biogenesis; peptidoglycan biosynthesis. Cell wall formation. This Thiobacillus denitrificans (strain ATCC 25259 / T1) protein is UDP-N-acetylenolpyruvoylglucosamine reductase.